Here is a 174-residue protein sequence, read N- to C-terminus: Gamma-crystallin C (174 aa).

2 consecutive Beta/gamma crystallin 'Greek key' domains span residues 2-40 (GKIT…RVES) and 41-83 (GCWM…CLIP). The residue at position 23 (Cys-23) is an S-methylcysteine. Positions 84-87 (QTGS) are connecting peptide. Beta/gamma crystallin 'Greek key' domains lie at 88-128 (HRLR…HVLE) and 129-171 (GCWV…RRVV).

The protein belongs to the beta/gamma-crystallin family. In terms of assembly, monomer.

Functionally, crystallins are the dominant structural components of the vertebrate eye lens. This chain is Gamma-crystallin C (CRYGC), found in Macaca mulatta (Rhesus macaque).